Here is a 471-residue protein sequence, read N- to C-terminus: MAMAGCNGFFLHQLRQPRLQLARQLGRTPSRAYSAPSNGSIPAAKKKYVPTKGTYPLGFRTSGTIVGVKPSNTTKPDLALLTSDAPCVAAAVFTKNKFQAAPVTFSRNLLERRKNQGIQSVIINSGCANAVTGKGGLEDATKMAQEADKCTGQNESTIVMSTGVIGQRLPIDKILNKVPSAHGALGGSHDHWLAAAKAICTTDTFPKLMSRTFALPSSPGVEYRIAGMTKGAGMIHPNMATLLGVIATDAPITSAALPSALKHAVDRSFNSITIDGDTSTNDTVALFANGAAGGKEVAEGTPDYDAFRAVLTDFAAELAQLVVRDGEGATKFVTVRVTESASEEAARRIASTIARSPLVKTALYGKDANWGRILCATGYSLISEPGQPINDVPEIAPEKTNVSFIPTDGTAELKLLVNGEPEKVDEARAAEILELEDLEILVRLGQGDKQATYWTCDYSHEYITINGDYRT.

The N-terminal 33 residues, 1-33 (MAMAGCNGFFLHQLRQPRLQLARQLGRTPSRAY), are a transit peptide targeting the mitochondrion. Substrate-binding residues include T201, K230, T241, E327, N466, and T471. T241 acts as the Nucleophile in catalysis.

Belongs to the ArgJ family. In terms of assembly, heterodimer of an alpha and a beta chain. Post-translationally, the alpha and beta chains are autoproteolytically processed from a single precursor protein within the mitochondrion.

It is found in the mitochondrion matrix. It carries out the reaction N(2)-acetyl-L-ornithine + L-glutamate = N-acetyl-L-glutamate + L-ornithine. The catalysed reaction is L-glutamate + acetyl-CoA = N-acetyl-L-glutamate + CoA + H(+). The protein operates within amino-acid biosynthesis; L-arginine biosynthesis; L-ornithine and N-acetyl-L-glutamate from L-glutamate and N(2)-acetyl-L-ornithine (cyclic): step 1/1. It participates in amino-acid biosynthesis; L-arginine biosynthesis; N(2)-acetyl-L-ornithine from L-glutamate: step 1/4. In terms of biological role, catalyzes two activities which are involved in the cyclic version of arginine biosynthesis: the synthesis of acetylglutamate from glutamate and acetyl-CoA, and of ornithine by transacetylation between acetylornithine and glutamate. This Chaetomium globosum (strain ATCC 6205 / CBS 148.51 / DSM 1962 / NBRC 6347 / NRRL 1970) (Soil fungus) protein is Arginine biosynthesis bifunctional protein ArgJ, mitochondrial.